The chain runs to 319 residues: Large ribosomal subunit protein uL10 (319 aa).

A compositionally biased stretch (low complexity) spans 286-295; that stretch reads ADSGAAAPSA. A disordered region spans residues 286-319; the sequence is ADSGAAAPSAAKEEEKKEEPEEESDGDLGMSLFD.

It belongs to the universal ribosomal protein uL10 family. In terms of assembly, P0 forms a pentameric complex by interaction with dimers of P1 and P2. Interacts with NSF. Post-translationally, phosphorylated. In terms of tissue distribution, highly expressed in stems, inflorescences and immature seeds (at protein level). Expressed in leaves and mature seeds (at protein level).

Its function is as follows. Ribosomal protein P0 is the functional equivalent of E.coli protein L10. The chain is Large ribosomal subunit protein uL10 from Oryza sativa subsp. japonica (Rice).